The primary structure comprises 314 residues: Putative SET domain-containing protein L222 (314 aa).

The SET domain maps to 23-172; that stretch reads EYIQVIYQNP…ANTEITISYG (150 aa).

This sequence belongs to the class V-like SAM-binding methyltransferase superfamily.

This chain is Putative SET domain-containing protein L222, found in Acanthamoeba polyphaga mimivirus (APMV).